The sequence spans 82 residues: ATP synthase subunit c (82 aa).

2 consecutive transmembrane segments (helical) span residues 7–27 and 57–77; these read AASVVAAGLAVGLGAIGPGIG and FAFMESLTIYGLVVALVLLFA.

This sequence belongs to the ATPase C chain family. F-type ATPases have 2 components, F(1) - the catalytic core - and F(0) - the membrane proton channel. F(1) has five subunits: alpha(3), beta(3), gamma(1), delta(1), epsilon(1). F(0) has four main subunits: a(1), b(1), b'(1) and c(10-14). The alpha and beta chains form an alternating ring which encloses part of the gamma chain. F(1) is attached to F(0) by a central stalk formed by the gamma and epsilon chains, while a peripheral stalk is formed by the delta, b and b' chains.

It localises to the cellular thylakoid membrane. Its function is as follows. F(1)F(0) ATP synthase produces ATP from ADP in the presence of a proton or sodium gradient. F-type ATPases consist of two structural domains, F(1) containing the extramembraneous catalytic core and F(0) containing the membrane proton channel, linked together by a central stalk and a peripheral stalk. During catalysis, ATP synthesis in the catalytic domain of F(1) is coupled via a rotary mechanism of the central stalk subunits to proton translocation. In terms of biological role, key component of the F(0) channel; it plays a direct role in translocation across the membrane. A homomeric c-ring of between 10-14 subunits forms the central stalk rotor element with the F(1) delta and epsilon subunits. The polypeptide is ATP synthase subunit c (Prochlorococcus marinus (strain MIT 9303)).